We begin with the raw amino-acid sequence, 717 residues long: CRISPR-associated protein Cas8b (717 aa).

Disordered stretches follow at residues 263 to 283 (IGVF…DQSW) and 698 to 717 (HEKE…STTN). The span at 701-717 (EDEDDQDTEEPAESTTN) shows a compositional bias: acidic residues.

It localises to the cytoplasm. In terms of biological role, CRISPR (clustered regularly interspaced short palindromic repeat) is an adaptive immune system that provides protection against mobile genetic elements (viruses, transposable elements and conjugative plasmids). CRISPR clusters contain sequences complementary to antecedent mobile elements and target invading nucleic acids. CRISPR clusters are transcribed and processed into CRISPR RNA (crRNA). Plasmid targeted by CRISPR locus P1 transform wild-type cells very poorly. This subunit might be involved in stabilizing crRNA. The chain is CRISPR-associated protein Cas8b from Haloferax volcanii (strain ATCC 29605 / DSM 3757 / JCM 8879 / NBRC 14742 / NCIMB 2012 / VKM B-1768 / DS2) (Halobacterium volcanii).